A 252-amino-acid chain; its full sequence is F-box/SPRY domain-containing protein 1 (252 aa).

Residues M1–H48 enclose the F-box domain. A B30.2/SPRY domain is found at V58–L250.

This sequence belongs to the FBXO45/Fsn family. In terms of assembly, component of an E3 ubiquitin ligase complex composed of hiw and Fsn.

Its subcellular location is the synapse. The protein operates within protein modification; protein ubiquitination. Functionally, required in the presynaptic motoneuron to down-regulate the levels of wnd and restrain synaptic terminal growth at the neuromuscular junction (NMJ). The chain is F-box/SPRY domain-containing protein 1 from Drosophila grimshawi (Hawaiian fruit fly).